We begin with the raw amino-acid sequence, 1187 residues long: Trafficking protein particle complex II-specific subunit 120 homolog (1187 aa).

The segment at 1037–1059 (GTTAKTDSSKEPGDGSSRSADES) is disordered.

The protein belongs to the TRS120 family. As to quaternary structure, part of the multisubunit TRAPP (transport protein particle) II complex composed of BET3, BET5, TRS20, TRS23, TRS31, TRS33, TRS65, TRS85, TRS120 and TRS130.

The protein localises to the golgi apparatus. The protein resides in the trans-Golgi network. Its subcellular location is the early endosome. In terms of biological role, specific subunit of the TRAPP II complex, a highly conserved vesicle tethering complex that is required for the proper transport of proteins in post-Golgi trafficking pathways to the growing cell plate in mitotic active cells. The chain is Trafficking protein particle complex II-specific subunit 120 homolog from Oryza sativa subsp. japonica (Rice).